The following is a 527-amino-acid chain: EGF domain-specific O-linked N-acetylglucosamine transferase (527 aa).

An N-terminal signal peptide occupies residues 1–17; sequence MLMLFVFGVLLHEVSLS. Residues 295–297 carry the Required for optimal activity motif; that stretch reads DYD. A glycan (N-linked (GlcNAc...) asparagine) is linked at asparagine 354. A Prevents secretion from ER motif is present at residues 524 to 527; the sequence is HDEL.

The protein belongs to the glycosyltransferase 61 family.

The protein localises to the endoplasmic reticulum lumen. The enzyme catalyses L-seryl-[protein] + UDP-N-acetyl-alpha-D-glucosamine = 3-O-(N-acetyl-beta-D-glucosaminyl)-L-seryl-[protein] + UDP + H(+). It carries out the reaction L-threonyl-[protein] + UDP-N-acetyl-alpha-D-glucosamine = 3-O-(N-acetyl-beta-D-glucosaminyl)-L-threonyl-[protein] + UDP + H(+). Functionally, catalyzes the transfer of a single N-acetylglucosamine from UDP-GlcNAc to a serine or threonine residue in extracellular proteins resulting in their modification with a beta-linked N-acetylglucosamine (O-GlcNAc). Specifically glycosylates the Thr residue located between the fifth and sixth conserved cysteines of folded EGF-like domains. The protein is EGF domain-specific O-linked N-acetylglucosamine transferase (EOGT) of Pan troglodytes (Chimpanzee).